Here is a 195-residue protein sequence, read N- to C-terminus: Putative nucleotidase BH1399 (195 aa).

This sequence belongs to the 5'(3')-deoxyribonucleotidase family.

The polypeptide is Putative nucleotidase BH1399 (Halalkalibacterium halodurans (strain ATCC BAA-125 / DSM 18197 / FERM 7344 / JCM 9153 / C-125) (Bacillus halodurans)).